We begin with the raw amino-acid sequence, 162 residues long: Transcription elongation factor GreA (162 aa).

A coiled-coil region spans residues 48-76 (NSEYQSAKDEQAFVEGRVKQLQQMIQFAQ). Residues 111–132 (GSAESDPLSGKISNDSPMGKAL) are disordered.

Belongs to the GreA/GreB family.

Its function is as follows. Necessary for efficient RNA polymerase transcription elongation past template-encoded arresting sites. The arresting sites in DNA have the property of trapping a certain fraction of elongating RNA polymerases that pass through, resulting in locked ternary complexes. Cleavage of the nascent transcript by cleavage factors such as GreA or GreB allows the resumption of elongation from the new 3'terminus. GreA releases sequences of 2 to 3 nucleotides. The polypeptide is Transcription elongation factor GreA (Oenococcus oeni (strain ATCC BAA-331 / PSU-1)).